Consider the following 265-residue polypeptide: MDKASLGIGIFDSGVGGVTVLKELINLLPGENFYYLGDTAHVPYGSKSKEELLILGDAIIRFFLKLGVKMVVFACNTSSAITLPILKERYPVLMEGMLEPLRKNMPAKAKVGVLATEATVKSGLYQKKLMETNKFQEVYMIACPQYVPLIEKGIVSGKEVEEATREYFEPLLKEEVRDVVLGCTHYPFLTETIQKLYPKIQVIDPAAYVAREVYRKLKENKLLGENGGKVQFYVTGDEKSLKNLGSLYLGYNIDRVQKIDLEVIV.

Substrate-binding positions include 12–13 and 44–45; these read DS and YG. The Proton donor/acceptor role is filled by cysteine 75. 76–77 contacts substrate; the sequence is NT. The active-site Proton donor/acceptor is cysteine 183. Substrate is bound at residue 184-185; sequence TH.

The protein belongs to the aspartate/glutamate racemases family.

It carries out the reaction L-glutamate = D-glutamate. Its pathway is cell wall biogenesis; peptidoglycan biosynthesis. In terms of biological role, provides the (R)-glutamate required for cell wall biosynthesis. The sequence is that of Glutamate racemase from Carboxydothermus hydrogenoformans (strain ATCC BAA-161 / DSM 6008 / Z-2901).